We begin with the raw amino-acid sequence, 276 residues long: Diaminopimelate epimerase (276 aa).

Substrate is bound by residues asparagine 13, glutamine 46, and asparagine 66. The active-site Proton donor is cysteine 75. Substrate contacts are provided by residues 76–77 (GN), asparagine 159, asparagine 192, and 210–211 (ER). The Proton acceptor role is filled by cysteine 219. 220 to 221 (GS) is a substrate binding site.

This sequence belongs to the diaminopimelate epimerase family. In terms of assembly, homodimer.

The protein resides in the cytoplasm. The enzyme catalyses (2S,6S)-2,6-diaminopimelate = meso-2,6-diaminopimelate. Its pathway is amino-acid biosynthesis; L-lysine biosynthesis via DAP pathway; DL-2,6-diaminopimelate from LL-2,6-diaminopimelate: step 1/1. Catalyzes the stereoinversion of LL-2,6-diaminopimelate (L,L-DAP) to meso-diaminopimelate (meso-DAP), a precursor of L-lysine and an essential component of the bacterial peptidoglycan. The protein is Diaminopimelate epimerase of Colwellia psychrerythraea (strain 34H / ATCC BAA-681) (Vibrio psychroerythus).